Reading from the N-terminus, the 55-residue chain is Sec-independent protein translocase protein TatA (55 aa).

A helical transmembrane segment spans residues 1–21 (MFGELGVPEVLFILGIALLIF).

This sequence belongs to the TatA/E family. Forms a complex with TatC.

It is found in the cell inner membrane. Part of the twin-arginine translocation (Tat) system that transports large folded proteins containing a characteristic twin-arginine motif in their signal peptide across membranes. TatA could form the protein-conducting channel of the Tat system. The sequence is that of Sec-independent protein translocase protein TatA from Koribacter versatilis (strain Ellin345).